Consider the following 1085-residue polypeptide: DNA mismatch repair protein MutS (1085 aa).

Positions 533 to 564 are disordered; sequence DEDLFGEEEQNAPPVGSSNHAVGTQPSADDEA. Positions 548 to 559 are enriched in polar residues; it reads GSSNHAVGTQPS. 812–819 is a binding site for ATP; the sequence is GPNMSGKS. The segment at 997–1042 is disordered; the sequence is ERRAPRSAPPTVPARGDDRRSAGRASSSGAGAARGEQGRTLPDGQL. Residues 1019–1031 show a composition bias toward low complexity; it reads GRASSSGAGAARG.

This sequence belongs to the DNA mismatch repair MutS family.

In terms of biological role, this protein is involved in the repair of mismatches in DNA. It is possible that it carries out the mismatch recognition step. This protein has a weak ATPase activity. In Roseiflexus sp. (strain RS-1), this protein is DNA mismatch repair protein MutS.